Reading from the N-terminus, the 466-residue chain is MKKTRFVLNSIALGLSVLSTSFVAHVAQATLPSFVSEQNSLAPMLEKVQPAVVTLSVEGKAKVDSRSPFLDDIPEEFKFFFGDRFAEQFGGRGESKRNFRGLGSGVIINASKGYVLTNNHVIDGADKITVQLQDGREFKAKLVGKDEQSDIALVQLEKPSNLTEIKFADSDKLRVGDFTVAIGNPFGLGQTVTSGIVSALGRSTGSDSGTYENYIQTDAAVNRGNSGGALVNLNGELIGINTAIISPSGGNAGIAFAIPSNQASNLVQQILEFGQVRRGLLGIKGGELNADLAKAFNVSAQQGAFVSEVLPKSAAEKAGLKAGDIITAMNGQKISSFAEIRAKIATTGAGKEISLTYLRDGKSHDVKMKLQADDSSQLSSKTELPALDGATLKDYDAKGVKGIEITKIQPNSLAAQRGLKSGDIIIGINRQMIENIRELNKVLETEPSAVALNILRGDSNFYLLVQ.

A signal peptide spans 1–29 (MKKTRFVLNSIALGLSVLSTSFVAHVAQA). Active-site charge relay system residues include H120, D150, and S226. PDZ domains follow at residues 270–361 (ILEF…LRDG) and 367–458 (KMKL…LRGD).

The protein belongs to the peptidase S1C family.

The protein resides in the periplasm. This is Probable periplasmic serine protease do/HhoA-like from Haemophilus influenzae (strain ATCC 51907 / DSM 11121 / KW20 / Rd).